The chain runs to 262 residues: Putative outer membrane protein CPn_1034/CP_0818/CPj1034/CpB1074 (262 aa).

Residues 1-17 (MKTWLFFTFLFSCSSFY) form the signal peptide.

The protein resides in the cell outer membrane. The sequence is that of Putative outer membrane protein CPn_1034/CP_0818/CPj1034/CpB1074 from Chlamydia pneumoniae (Chlamydophila pneumoniae).